The sequence spans 468 residues: Soluble pyridine nucleotide transhydrogenase (468 aa).

38 to 47 is a binding site for FAD; it reads ERHYNVGGGC.

The protein belongs to the class-I pyridine nucleotide-disulfide oxidoreductase family. The cofactor is FAD.

Its subcellular location is the cytoplasm. The catalysed reaction is NAD(+) + NADPH = NADH + NADP(+). Functionally, conversion of NADPH, generated by peripheral catabolic pathways, to NADH, which can enter the respiratory chain for energy generation. The polypeptide is Soluble pyridine nucleotide transhydrogenase (Pectobacterium atrosepticum (strain SCRI 1043 / ATCC BAA-672) (Erwinia carotovora subsp. atroseptica)).